We begin with the raw amino-acid sequence, 352 residues long: Ribosomal RNA large subunit methyltransferase M (352 aa).

Residues serine 184, 217 to 220 (APGG), aspartate 236, aspartate 256, and aspartate 272 contribute to the S-adenosyl-L-methionine site. Lysine 301 serves as the catalytic Proton acceptor.

The protein belongs to the class I-like SAM-binding methyltransferase superfamily. RNA methyltransferase RlmE family. RlmM subfamily. In terms of assembly, monomer.

It is found in the cytoplasm. It catalyses the reaction cytidine(2498) in 23S rRNA + S-adenosyl-L-methionine = 2'-O-methylcytidine(2498) in 23S rRNA + S-adenosyl-L-homocysteine + H(+). Functionally, catalyzes the 2'-O-methylation at nucleotide C2498 in 23S rRNA. In Pseudomonas aeruginosa (strain UCBPP-PA14), this protein is Ribosomal RNA large subunit methyltransferase M.